A 416-amino-acid chain; its full sequence is Putative L-glutamine:3-amino-2,3-dideoxy-scyllo-inosose aminotransferase (416 aa).

An N6-(pyridoxal phosphate)lysine modification is found at Lys199.

It belongs to the DegT/DnrJ/EryC1 family. L-glutamine:2-deoxy-scyllo-inosose/scyllo-inosose aminotransferase subfamily. It depends on pyridoxal 5'-phosphate as a cofactor.

The catalysed reaction is 3-amino-2,3-dideoxy-scyllo-inosose + L-glutamine = 2-deoxystreptamine + 2-oxoglutaramate. Its pathway is metabolic intermediate biosynthesis; 2-deoxystreptamine biosynthesis; 2-deoxystreptamine from D-glucose 6-phosphate: step 4/4. It functions in the pathway antibiotic biosynthesis; tobramycin biosynthesis. In terms of biological role, catalyzes the transamination of 3-amino-2,3-dideoxy-scyllo-inosose (amino-DOI) into 2-deoxystreptamine (DOS). In Streptoalloteichus tenebrarius (strain ATCC 17920 / DSM 40477 / JCM 4838 / CBS 697.72 / NBRC 16177 / NCIMB 11028 / NRRL B-12390 / A12253. 1 / ISP 5477) (Streptomyces tenebrarius), this protein is Putative L-glutamine:3-amino-2,3-dideoxy-scyllo-inosose aminotransferase (tobS2).